The primary structure comprises 318 residues: Acetyl-coenzyme A carboxylase carboxyl transferase subunit alpha (318 aa).

In terms of domain architecture, CoA carboxyltransferase C-terminal spans Lys-39–Glu-293.

This sequence belongs to the AccA family. Acetyl-CoA carboxylase is a heterohexamer composed of biotin carboxyl carrier protein (AccB), biotin carboxylase (AccC) and two subunits each of ACCase subunit alpha (AccA) and ACCase subunit beta (AccD).

The protein resides in the cytoplasm. It carries out the reaction N(6)-carboxybiotinyl-L-lysyl-[protein] + acetyl-CoA = N(6)-biotinyl-L-lysyl-[protein] + malonyl-CoA. It participates in lipid metabolism; malonyl-CoA biosynthesis; malonyl-CoA from acetyl-CoA: step 1/1. Functionally, component of the acetyl coenzyme A carboxylase (ACC) complex. First, biotin carboxylase catalyzes the carboxylation of biotin on its carrier protein (BCCP) and then the CO(2) group is transferred by the carboxyltransferase to acetyl-CoA to form malonyl-CoA. The protein is Acetyl-coenzyme A carboxylase carboxyl transferase subunit alpha of Geobacter metallireducens (strain ATCC 53774 / DSM 7210 / GS-15).